We begin with the raw amino-acid sequence, 374 residues long: Alcohol dehydrogenase S chain (374 aa).

The residue at position 2 (Ser2) is an N-acetylserine. Cys47, His68, Cys98, Cys101, Cys104, Cys112, and Cys174 together coordinate Zn(2+). Residues Gly199 to Gly204, Asp223, Lys228, Val292 to Val294, and Arg369 contribute to the NAD(+) site.

Belongs to the zinc-containing alcohol dehydrogenase family. Class-I subfamily. Dimer of identical or non-identical chains of two types (E and S) coded by 2 separate genes at different loci. It depends on Zn(2+) as a cofactor.

It is found in the cytoplasm. The catalysed reaction is a primary alcohol + NAD(+) = an aldehyde + NADH + H(+). The enzyme catalyses a secondary alcohol + NAD(+) = a ketone + NADH + H(+). The polypeptide is Alcohol dehydrogenase S chain (Equus caballus (Horse)).